A 296-amino-acid chain; its full sequence is Ribosomal RNA small subunit methyltransferase H (296 aa).

S-adenosyl-L-methionine is bound by residues 30 to 32 (GGH), Asp49, Phe76, Asp97, and Gln104.

It belongs to the methyltransferase superfamily. RsmH family.

The protein resides in the cytoplasm. It catalyses the reaction cytidine(1402) in 16S rRNA + S-adenosyl-L-methionine = N(4)-methylcytidine(1402) in 16S rRNA + S-adenosyl-L-homocysteine + H(+). Functionally, specifically methylates the N4 position of cytidine in position 1402 (C1402) of 16S rRNA. The polypeptide is Ribosomal RNA small subunit methyltransferase H (Mesomycoplasma hyopneumoniae (strain 7448) (Mycoplasma hyopneumoniae)).